The chain runs to 328 residues: Probable cytosolic iron-sulfur protein assembly protein 1 (328 aa).

7 WD repeats span residues 12 to 49 (LHGD…LVEE), 54 to 93 (AHKK…YSGE), 102 to 141 (GHEN…EEFE), 148 to 187 (EHSQ…WECA), 192 to 233 (GHGG…ADVF), 246 to 284 (VHTR…RWEV), and 291 to 328 (AHTV…LREE).

The protein belongs to the WD repeat CIA1 family. As to quaternary structure, interacts with NAR1.

Its subcellular location is the cytoplasm. The protein resides in the nucleus. Functionally, essential component of the cytosolic iron-sulfur (Fe/S) protein assembly machinery. Required for the maturation of extramitochondrial Fe/S proteins. The protein is Probable cytosolic iron-sulfur protein assembly protein 1 of Eremothecium gossypii (strain ATCC 10895 / CBS 109.51 / FGSC 9923 / NRRL Y-1056) (Yeast).